We begin with the raw amino-acid sequence, 391 residues long: Casein kinase II subunit alpha (391 aa).

The interaction with beta subunit stretch occupies residues 36–41 (QDDYQL). The Protein kinase domain occupies 39–324 (YQLVRKLGRG…AREAMEHPYF (286 aa)). ATP is bound by residues 45–53 (LGRGKYSEV) and Lys-68. Residue Asp-156 is the Proton acceptor of the active site. Residues 335 to 346 (GSSNMPGGSTPV) are compositionally biased toward polar residues. Residues 335–363 (GSSNMPGGSTPVSSASMMSGISSVPTPSP) are disordered. The span at 347–357 (SSASMMSGISS) shows a compositional bias: low complexity.

It belongs to the protein kinase superfamily. Ser/Thr protein kinase family. CK2 subfamily. As to quaternary structure, tetramer composed of an alpha chain, an alpha' and two beta chains. Interacts with RNPS1.

The protein resides in the nucleus. The catalysed reaction is L-seryl-[protein] + ATP = O-phospho-L-seryl-[protein] + ADP + H(+). It catalyses the reaction L-threonyl-[protein] + ATP = O-phospho-L-threonyl-[protein] + ADP + H(+). Its function is as follows. Catalytic subunit of a constitutively active serine/threonine-protein kinase complex that phosphorylates a large number of substrates containing acidic residues C-terminal to the phosphorylated serine or threonine. Regulates numerous cellular processes, such as cell cycle progression, apoptosis and transcription, as well as viral infection. May act as a regulatory node which integrates and coordinates numerous signals leading to an appropriate cellular response. During mitosis, functions as a component of the p53/TP53-dependent spindle assembly checkpoint (SAC) that maintains cyclin-B-CDK1 activity and G2 arrest in response to spindle damage. Can also negatively regulate apoptosis. Phosphorylates the caspases CASP9 and CASP2 and the apoptotic regulator NOL3. Phosphorylation protects CASP9 from cleavage and activation by CASP8, and inhibits the dimerization of CASP2 and activation of CASP8. Plays an important role in the circadian clock function by phosphorylating BMAL1. The chain is Casein kinase II subunit alpha (CSNK2A1) from Gallus gallus (Chicken).